Here is a 316-residue protein sequence, read N- to C-terminus: uncharacterized protein (316 aa).

The tract at residues A285–G316 is disordered. Acidic residues predominate over residues D289–P298.

In terms of biological role, possibly necessary for replication. This is an uncharacterized protein from Halobacterium salinarum (Halobacterium halobium).